The chain runs to 123 residues: Phosphoribosyl-AMP cyclohydrolase (123 aa).

Asp81 contributes to the Mg(2+) binding site. Residue Cys82 coordinates Zn(2+). 2 residues coordinate Mg(2+): Asp83 and Asp85. Zn(2+) is bound by residues Cys98 and Cys105.

The protein belongs to the PRA-CH family. Homodimer. Mg(2+) is required as a cofactor. The cofactor is Zn(2+).

Its subcellular location is the cytoplasm. It catalyses the reaction 1-(5-phospho-beta-D-ribosyl)-5'-AMP + H2O = 1-(5-phospho-beta-D-ribosyl)-5-[(5-phospho-beta-D-ribosylamino)methylideneamino]imidazole-4-carboxamide. The protein operates within amino-acid biosynthesis; L-histidine biosynthesis; L-histidine from 5-phospho-alpha-D-ribose 1-diphosphate: step 3/9. Functionally, catalyzes the hydrolysis of the adenine ring of phosphoribosyl-AMP. In Nocardioides sp. (strain ATCC BAA-499 / JS614), this protein is Phosphoribosyl-AMP cyclohydrolase.